Consider the following 222-residue polypeptide: Homing endonuclease I-ApeI (222 aa).

Probably functions as a monomer. Mg(2+) serves as cofactor. Mn(2+) is required as a cofactor.

In terms of biological role, endonuclease involved in 16S rRNA intron I-alpha homing. Recognizes the minimal target 5'-GCAAGGCTGAAACTTAAAGG-3'; generates 4 base 3' protruding ends 5'-AAAC-3' and 5'-GTTT-3'. This Aeropyrum pernix (strain ATCC 700893 / DSM 11879 / JCM 9820 / NBRC 100138 / K1) protein is Homing endonuclease I-ApeI (apeI).